We begin with the raw amino-acid sequence, 312 residues long: Homoserine O-acetyltransferase (312 aa).

Cys142 acts as the Acyl-thioester intermediate in catalysis. Lys163 and Ser192 together coordinate substrate. The active-site Proton acceptor is His235. Glu237 is an active-site residue. Arg249 lines the substrate pocket.

This sequence belongs to the MetA family.

The protein resides in the cytoplasm. It catalyses the reaction L-homoserine + acetyl-CoA = O-acetyl-L-homoserine + CoA. The protein operates within amino-acid biosynthesis; L-methionine biosynthesis via de novo pathway; O-acetyl-L-homoserine from L-homoserine: step 1/1. Functionally, transfers an acetyl group from acetyl-CoA to L-homoserine, forming acetyl-L-homoserine. This chain is Homoserine O-acetyltransferase, found in Chelativorans sp. (strain BNC1).